The primary structure comprises 258 residues: MSAYPKSYNPFDDDGEDEGARPAPWRDARDLPDGPDAPADRQQYLRQEVLRRAEATAASTSRSLALMYESEKVGVASSEELARQRGVLERTEKMVDKMDQDLKISQKHINSIKSVFGGLVNYFKSKPVETPPEQNGTLTSQPNNRLKEAISTSKEQEAKYQASHPNLRKLDDTDPVPRGAGSAMSTDAYPKNPHLRAYHQKIDSNLDELSMGLGRLKDIALGMQTEIEEQDDILDRLTTKVDKLDVNIKSTERKVRQL.

A disordered region spans residues 1-41 (MSAYPKSYNPFDDDGEDEGARPAPWRDARDLPDGPDAPADR). Basic and acidic residues predominate over residues 18–32 (EGARPAPWRDARDLP). Residues 76 to 107 (ASSEELARQRGVLERTEKMVDKMDQDLKISQK) adopt a coiled-coil conformation. 3 positions are modified to phosphoserine: serine 77, serine 78, and serine 114. Phosphothreonine occurs at positions 130 and 137. The interval 150-191 (ISTSKEQEAKYQASHPNLRKLDDTDPVPRGAGSAMSTDAYPK) is disordered. Residues serine 163, serine 182, serine 185, serine 204, and serine 210 each carry the phosphoserine modification. In terms of domain architecture, t-SNARE coiled-coil homology spans 196–258 (RAYHQKIDSN…KSTERKVRQL (63 aa)).

It belongs to the SNAP-25 family. As to quaternary structure, forms a SNARE complex, composed of VAMP8, SNAP29 and STX17, involved in fusion of autophagosome with lysosome. Interacts with multiple syntaxins including STX6. Interacts with EIPR1. Interacts with STX17; this interaction is increased in the absence of TMEM39A. In terms of assembly, (Microbial infection) Interacts with Hantaan hantavirus nucleoprotein; this interaction prevents the breakdown of the viral glycoprotein N by virus-triggered autophagy. (Microbial infection) The interaction with STX17 is decreased in presence of SARS coronavirus-2/SARS-CoV-2 ORF3A protein. As to expression, found in brain, heart, kidney, liver, lung, placenta, skeletal muscle, spleen and pancreas.

The protein resides in the cytoplasm. Its subcellular location is the golgi apparatus membrane. It localises to the cytoplasmic vesicle. The protein localises to the autophagosome membrane. It is found in the cell projection. The protein resides in the cilium membrane. SNAREs, soluble N-ethylmaleimide-sensitive factor-attachment protein receptors, are essential proteins for fusion of cellular membranes. SNAREs localized on opposing membranes assemble to form a trans-SNARE complex, an extended, parallel four alpha-helical bundle that drives membrane fusion. SNAP29 is a SNARE involved in autophagy through the direct control of autophagosome membrane fusion with the lysososome membrane. Also plays a role in ciliogenesis by regulating membrane fusions. The sequence is that of Synaptosomal-associated protein 29 from Homo sapiens (Human).